A 138-amino-acid chain; its full sequence is Transcription factor Atoh7-b (138 aa).

Residues 33-85 (KRRLAANARERRRMQGLNTAFDSLRKVVPQWGEDKKLSKYETLQMALSYIMAL) enclose the bHLH domain.

It is found in the nucleus. It localises to the perikaryon. The protein localises to the cell projection. Its subcellular location is the axon. Its function is as follows. Transcription factor that binds to DNA at the consensus sequence 5'-CAG[GC]TG-3'. Positively regulates the determination of retinal ganglion cell fate and formation of the optic nerve and retino-hypothalamic tract. Required for retinal circadian rhythm photoentrainment. Plays a role in brainstem auditory signaling and binaural processing. Regulates the differentiation of olfactory receptor neurons. During retinal neurogenesis, activates the transcription of several genes such as brn3d, coe3, cbfa2t2, glis2, elrC and xgadd45-gamma. This is Transcription factor Atoh7-b from Xenopus laevis (African clawed frog).